Consider the following 157-residue polypeptide: 3-dehydroquinate dehydratase (157 aa).

Y22 (proton acceptor) is an active-site residue. 3 residues coordinate substrate: N73, H79, and D86. Residue H99 is the Proton donor of the active site. Substrate contacts are provided by residues 100–101 (LS) and R110.

This sequence belongs to the type-II 3-dehydroquinase family. Homododecamer.

The catalysed reaction is 3-dehydroquinate = 3-dehydroshikimate + H2O. Its pathway is metabolic intermediate biosynthesis; chorismate biosynthesis; chorismate from D-erythrose 4-phosphate and phosphoenolpyruvate: step 3/7. Functionally, catalyzes a trans-dehydration via an enolate intermediate. This is 3-dehydroquinate dehydratase from Roseiflexus castenholzii (strain DSM 13941 / HLO8).